The sequence spans 225 residues: Imidazole glycerol phosphate synthase subunit HisH (225 aa).

A Glutamine amidotransferase type-1 domain is found at 3-225 (TIAIVDYGMG…LYRNFVDWQP (223 aa)). The active-site Nucleophile is Cys-82. Residues His-205 and Glu-207 contribute to the active site.

Heterodimer of HisH and HisF.

It is found in the cytoplasm. It catalyses the reaction 5-[(5-phospho-1-deoxy-D-ribulos-1-ylimino)methylamino]-1-(5-phospho-beta-D-ribosyl)imidazole-4-carboxamide + L-glutamine = D-erythro-1-(imidazol-4-yl)glycerol 3-phosphate + 5-amino-1-(5-phospho-beta-D-ribosyl)imidazole-4-carboxamide + L-glutamate + H(+). The enzyme catalyses L-glutamine + H2O = L-glutamate + NH4(+). It participates in amino-acid biosynthesis; L-histidine biosynthesis; L-histidine from 5-phospho-alpha-D-ribose 1-diphosphate: step 5/9. Functionally, IGPS catalyzes the conversion of PRFAR and glutamine to IGP, AICAR and glutamate. The HisH subunit catalyzes the hydrolysis of glutamine to glutamate and ammonia as part of the synthesis of IGP and AICAR. The resulting ammonia molecule is channeled to the active site of HisF. The protein is Imidazole glycerol phosphate synthase subunit HisH of Bordetella bronchiseptica (strain ATCC BAA-588 / NCTC 13252 / RB50) (Alcaligenes bronchisepticus).